Consider the following 433-residue polypeptide: Phosphomethylpyrimidine synthase (433 aa).

Substrate is bound by residues Asn68, Met97, Tyr126, His162, 184–186, 225–228, and Glu264; these read SRG and DALR. His268 contacts Zn(2+). Tyr291 lines the substrate pocket. His332 is a Zn(2+) binding site. 3 residues coordinate [4Fe-4S] cluster: Cys408, Cys411, and Cys415.

It belongs to the ThiC family. The cofactor is [4Fe-4S] cluster.

It catalyses the reaction 5-amino-1-(5-phospho-beta-D-ribosyl)imidazole + S-adenosyl-L-methionine = 4-amino-2-methyl-5-(phosphooxymethyl)pyrimidine + CO + 5'-deoxyadenosine + formate + L-methionine + 3 H(+). It functions in the pathway cofactor biosynthesis; thiamine diphosphate biosynthesis. In terms of biological role, catalyzes the synthesis of the hydroxymethylpyrimidine phosphate (HMP-P) moiety of thiamine from aminoimidazole ribotide (AIR) in a radical S-adenosyl-L-methionine (SAM)-dependent reaction. The chain is Phosphomethylpyrimidine synthase from Fusobacterium nucleatum subsp. nucleatum (strain ATCC 25586 / DSM 15643 / BCRC 10681 / CIP 101130 / JCM 8532 / KCTC 2640 / LMG 13131 / VPI 4355).